The chain runs to 364 residues: UDP-N-acetylglucosamine--N-acetylmuramyl-(pentapeptide) pyrophosphoryl-undecaprenol N-acetylglucosamine transferase (364 aa).

UDP-N-acetyl-alpha-D-glucosamine contacts are provided by residues 13–15 (TGG), N125, R165, S192, and Q293.

Belongs to the glycosyltransferase 28 family. MurG subfamily.

Its subcellular location is the cell inner membrane. It carries out the reaction di-trans,octa-cis-undecaprenyl diphospho-N-acetyl-alpha-D-muramoyl-L-alanyl-D-glutamyl-meso-2,6-diaminopimeloyl-D-alanyl-D-alanine + UDP-N-acetyl-alpha-D-glucosamine = di-trans,octa-cis-undecaprenyl diphospho-[N-acetyl-alpha-D-glucosaminyl-(1-&gt;4)]-N-acetyl-alpha-D-muramoyl-L-alanyl-D-glutamyl-meso-2,6-diaminopimeloyl-D-alanyl-D-alanine + UDP + H(+). Its pathway is cell wall biogenesis; peptidoglycan biosynthesis. In terms of biological role, cell wall formation. Catalyzes the transfer of a GlcNAc subunit on undecaprenyl-pyrophosphoryl-MurNAc-pentapeptide (lipid intermediate I) to form undecaprenyl-pyrophosphoryl-MurNAc-(pentapeptide)GlcNAc (lipid intermediate II). The protein is UDP-N-acetylglucosamine--N-acetylmuramyl-(pentapeptide) pyrophosphoryl-undecaprenol N-acetylglucosamine transferase of Cereibacter sphaeroides (strain ATCC 17029 / ATH 2.4.9) (Rhodobacter sphaeroides).